A 147-amino-acid polypeptide reads, in one-letter code: Large ribosomal subunit protein bL9 (147 aa).

Belongs to the bacterial ribosomal protein bL9 family.

Its function is as follows. Binds to the 23S rRNA. In Cytophaga hutchinsonii (strain ATCC 33406 / DSM 1761 / CIP 103989 / NBRC 15051 / NCIMB 9469 / D465), this protein is Large ribosomal subunit protein bL9.